The chain runs to 497 residues: 4,4'-diapolycopene oxygenase (497 aa).

Belongs to the carotenoid/retinoid oxidoreductase family. FAD is required as a cofactor.

The catalysed reaction is all-trans-4,4'-diapolycopene + 4 AH2 + 4 O2 = all-trans-4,4'-diapolycopene-4,4'-dial + 4 A + 6 H2O. It carries out the reaction all-trans-4,4'-diaponeurosporene + 2 AH2 + 2 O2 = 4,4'-diaponeurosporenal + 2 A + 3 H2O. It participates in carotenoid biosynthesis. Functionally, involved in the biosynthesis of C30 carotenoids. Catalyzes the oxidation of the terminal methyl side groups of 4,4'-diapolycopene to yield 4,4'-diapolycopen-4,4'-dial via the aldehyde intermediate 4,4'-diapolycopen-al. Also able to catalyze the oxidation of the terminal methyl side group of 4,4'-diaponeurosporene to form 4,4'-diaponeurosporen-4-al. It has moderate to low activity on the C40 substrates neurosporene and lycopene, and has no detectable activity on zeta-carotene or beta-carotene. The chain is 4,4'-diapolycopene oxygenase from Methylomonas sp.